The sequence spans 568 residues: Glucose-6-phosphate isomerase, cytosolic 1 (568 aa).

Glu-360 serves as the catalytic Proton donor. Catalysis depends on residues His-391 and Lys-516.

This sequence belongs to the GPI family. In terms of assembly, homodimer.

Its subcellular location is the cytoplasm. It catalyses the reaction alpha-D-glucose 6-phosphate = beta-D-fructose 6-phosphate. Its pathway is carbohydrate degradation; glycolysis; D-glyceraldehyde 3-phosphate and glycerone phosphate from D-glucose: step 2/4. The protein is Glucose-6-phosphate isomerase, cytosolic 1 (PGIC1) of Clarkia arcuata (Glandular clarkia).